A 372-amino-acid polypeptide reads, in one-letter code: uncharacterized protein (372 aa).

4–18 contributes to the FAD binding site; it reads YIIVGAGILGASTAY.

Belongs to the DadA oxidoreductase family. FAD is required as a cofactor.

This is an uncharacterized protein from Bacillus subtilis (strain 168).